We begin with the raw amino-acid sequence, 999 residues long: Caspase recruitment domain-containing protein 14 (999 aa).

The CARD domain occupies 15–107 (DEEMLWDMLE…DVYTLVTGLQ (93 aa)). Positions 125 to 411 (TECLAGAISS…QLRRLQAEAP (287 aa)) form a coiled coil. The tract at residues 409–565 (EAPGGPKQEA…RRPARKILSQ (157 aa)) is maintains the protein in an inactive state. S541 bears the Phosphoserine mark. The PDZ domain maps to 572-655 (QGDALLEQIG…SCYLSVKINT (84 aa)). The region spanning 803-986 (SESCFTLAPY…LLSCVRLAIA (184 aa)) is the Guanylate kinase-like domain.

As to quaternary structure, interacts (via CARD domain) with BCL10 (via CARD domain). Forms a complex with MALT1 and BCL10; resulting in the formation of a CBM (CARD14-BLC10-MALT1) complex. Interacts with TRAF2, TRAF3 and TRAF6.

The protein resides in the cytoplasm. Acts as a scaffolding protein that can activate the inflammatory transcription factor NF-kappa-B and p38/JNK MAP kinase signaling pathways. Forms a signaling complex with BCL10 and MALT1, and activates MALT1 proteolytic activity and inflammatory gene expression. MALT1 is indispensable for CARD14-induced activation of NF-kappa-B and p38/JNK MAP kinases. May play a role in signaling mediated by TRAF2, TRAF3 and TRAF6 and protects cells against apoptosis. The protein is Caspase recruitment domain-containing protein 14 (Card14) of Mus musculus (Mouse).